The primary structure comprises 626 residues: DNA mismatch repair protein MutL (626 aa).

Positions 352-399 (QPPSPSFTSRPSSAGYASGSWHPAVSSPRTEWSPQTAHPAHRPLDLGA) are disordered. A compositionally biased stretch (polar residues) spans 378-387 (SPRTEWSPQT).

Belongs to the DNA mismatch repair MutL/HexB family.

Its function is as follows. This protein is involved in the repair of mismatches in DNA. It is required for dam-dependent methyl-directed DNA mismatch repair. May act as a 'molecular matchmaker', a protein that promotes the formation of a stable complex between two or more DNA-binding proteins in an ATP-dependent manner without itself being part of a final effector complex. The chain is DNA mismatch repair protein MutL from Brucella anthropi (strain ATCC 49188 / DSM 6882 / CCUG 24695 / JCM 21032 / LMG 3331 / NBRC 15819 / NCTC 12168 / Alc 37) (Ochrobactrum anthropi).